A 72-amino-acid chain; its full sequence is uncharacterized protein (72 aa).

This is an uncharacterized protein from Archaeoglobus fulgidus (strain ATCC 49558 / DSM 4304 / JCM 9628 / NBRC 100126 / VC-16).